An 857-amino-acid polypeptide reads, in one-letter code: Zinc finger protein 574 (857 aa).

C2H2-type zinc fingers lie at residues 15-37, 58-80, 99-121, 206-228, 297-319, 324-346, 352-374, 380-401, 428-451, 457-479, 485-507, 513-535, 541-563, and 569-591; these read YVCSECGEEYPSLEEALEHQQSH, YQCLECGLLLRTPEDLLAHQELH, YECPECKALFNSQDVWMAHRYTH, YKCSECTQLFQTPGEFLEHQGTH, FSCGDCSETFQTTKDLEEHQISH, FSCPLCSKVFPTYPEVGEHLKSH, YLCVDCGLAFVSEAVLLNHRRSH, FTCECGLTFLNMTRFLYHRRVH, FHCDPCGKDFPLLSQFLRHQRFVH, HKCPTCGKHFKKGSHLRTHMLTH, YSCTVCSKSFNSQANLLRHRLTH, YKCQLCGKAFSQSSTLQQHQYVH, YKCNECGINFHRPYRLLLHQYHH, and YKCQDCGLSFLLKRLLEVHQLGH. A C2H2-type 15; degenerate zinc finger spans residues 597 to 619; it reads HRCRECGTNFPSVQRLQDHRCSK. C2H2-type zinc fingers lie at residues 628-651, 681-703, 709-731, 737-759, and 765-787; these read LECPICGKKVTSDAHLNTHVAAQH, LECSDCHKTFSTETSLQVHRRIH, YPCPDCGKAFRQSTHLKDHRRLH, FKCDVCGKAFTIAVRLSEHKRIH, and HSCPDCGRAYRSFSNLWKHRKLH. The tract at residues 648-678 is disordered; that stretch reads AAQHSGNKRSNVSSGKGTPVLPRNKLKGGGG. Residues 651–663 show a composition bias toward polar residues; it reads HSGNKRSNVSSGK.

This sequence belongs to the krueppel C2H2-type zinc-finger protein family.

The protein localises to the nucleus. May be involved in transcriptional regulation. This is Zinc finger protein 574 (znf574) from Xenopus tropicalis (Western clawed frog).